The sequence spans 166 residues: Cyclic pyranopterin monophosphate synthase (166 aa).

Substrate is bound by residues 83-85 (LCH) and 121-122 (ME). Asp-136 is a catalytic residue.

It belongs to the MoaC family. As to quaternary structure, homohexamer; trimer of dimers.

The enzyme catalyses (8S)-3',8-cyclo-7,8-dihydroguanosine 5'-triphosphate = cyclic pyranopterin phosphate + diphosphate. The protein operates within cofactor biosynthesis; molybdopterin biosynthesis. In terms of biological role, catalyzes the conversion of (8S)-3',8-cyclo-7,8-dihydroguanosine 5'-triphosphate to cyclic pyranopterin monophosphate (cPMP). This Trichodesmium erythraeum (strain IMS101) protein is Cyclic pyranopterin monophosphate synthase.